The sequence spans 266 residues: Putative carbamate hydrolase RutD (266 aa).

The region spanning 15 to 128 is the AB hydrolase-1 domain; sequence AVLLSSGLGG…NAHSARCFDA (114 aa).

This sequence belongs to the AB hydrolase superfamily. Hydrolase RutD family.

It carries out the reaction carbamate + 2 H(+) = NH4(+) + CO2. Functionally, involved in pyrimidine catabolism. May facilitate the hydrolysis of carbamate, a reaction that can also occur spontaneously. This chain is Putative carbamate hydrolase RutD, found in Variovorax paradoxus (strain S110).